Here is an 82-residue protein sequence, read N- to C-terminus: Mitotic-spindle organizing protein 1 (82 aa).

Ala2 carries the N-acetylalanine modification.

It belongs to the MOZART1 family. Associates with the gamma-tubulin ring complex (gTuRC) consisting of TUBGCP2, TUBGCP3, TUBGCP4, TUBGCP5 and TUBGCP6 and gamma-tubulin TUBG1 or TUBG2; within the complex, interacts with TUBGCP3 and TUBGCP6 to form a luminal bridge with actin that stabilizes the initial structure during complex assembly. Interacts with TUBG1.

It localises to the cytoplasm. It is found in the cytoskeleton. The protein resides in the microtubule organizing center. The protein localises to the centrosome. Its subcellular location is the spindle. Required for the recruitment and the assembly of the gamma-tubulin ring complex (gTuRC) at the centrosome. The gTuRC regulates the minus-end nucleation of alpha-beta tubulin heterodimers that grow into microtubule protafilaments, a critical step in centrosome duplication and spindle formation. The sequence is that of Mitotic-spindle organizing protein 1 (MZT1) from Homo sapiens (Human).